The following is a 358-amino-acid chain: Glycerophosphodiester phosphodiesterase, periplasmic (358 aa).

The N-terminal stretch at 1-25 (MKLTLKNLSMAIMMSTIVMGSSAMA) is a signal peptide. Positions 31–355 (KIVIAHRGAS…DFPDKAVKFL (325 aa)) constitute a GP-PDE domain. His-36 acts as the Proton acceptor in catalysis. Ca(2+)-binding residues include Glu-63 and Asp-65. Catalysis depends on His-78, which acts as the Proton donor. Ca(2+) is bound at residue Glu-171.

This sequence belongs to the glycerophosphoryl diester phosphodiesterase family. As to quaternary structure, homodimer. Requires Ca(2+) as cofactor.

The protein resides in the periplasm. It carries out the reaction a sn-glycero-3-phosphodiester + H2O = an alcohol + sn-glycerol 3-phosphate + H(+). Glycerophosphodiester phosphodiesterase hydrolyzes glycerophosphodiesters into glycerol-3-phosphate (G3P) and the corresponding alcohol. The polypeptide is Glycerophosphodiester phosphodiesterase, periplasmic (glpQ) (Escherichia coli (strain K12)).